Reading from the N-terminus, the 119-residue chain is RIIa domain-containing protein 1 (119 aa).

The RIIa domain maps to 70–104 (KEVSLLISGFFREMFLKRPDNILEFAAHYFTDPRL).

As to expression, abundant in tissues rich in highly ciliated cells, such as testis, trachea and olfactory epithelium.

The protein is RIIa domain-containing protein 1 (Riiad1) of Mus musculus (Mouse).